Consider the following 274-residue polypeptide: 2-amino-4,5-dihydroxy-6-oxo-7-(phosphonooxy)heptanoate synthase (274 aa).

It belongs to the DeoC/FbaB aldolase family. GriI subfamily. As to quaternary structure, homodecamer.

The catalysed reaction is 2-amino-4,5-dihydroxy-6-oxo-7-(phosphooxy)heptanoate = L-aspartate 4-semialdehyde + dihydroxyacetone phosphate. Functionally, catalyzes aldol condensation between L-aspartate-4-semialdehyde (ASA) and dihydroxyacetone phosphate (DHAP), to form 2-amino-4,5-dihydroxy-6-oxo-7-(phosphonooxy)heptanoate. The sequence is that of 2-amino-4,5-dihydroxy-6-oxo-7-(phosphonooxy)heptanoate synthase (griI) from Streptomyces griseus subsp. griseus (strain JCM 4626 / CBS 651.72 / NBRC 13350 / KCC S-0626 / ISP 5235).